The chain runs to 466 residues: Soluble pyridine nucleotide transhydrogenase (466 aa).

FAD is bound at residue 36–45 (ERYNNVGGGC).

It belongs to the class-I pyridine nucleotide-disulfide oxidoreductase family. FAD serves as cofactor.

Its subcellular location is the cytoplasm. It carries out the reaction NAD(+) + NADPH = NADH + NADP(+). Conversion of NADPH, generated by peripheral catabolic pathways, to NADH, which can enter the respiratory chain for energy generation. The polypeptide is Soluble pyridine nucleotide transhydrogenase (Yersinia pseudotuberculosis serotype O:1b (strain IP 31758)).